A 311-amino-acid polypeptide reads, in one-letter code: Probable cysteine synthase (311 aa).

Position 45 is an N6-(pyridoxal phosphate)lysine (Lys-45). Pyridoxal 5'-phosphate-binding positions include Asn-75, Gly-182–Thr-186, and Ser-270.

The protein belongs to the cysteine synthase/cystathionine beta-synthase family. Requires pyridoxal 5'-phosphate as cofactor.

The enzyme catalyses O-acetyl-L-serine + hydrogen sulfide = L-cysteine + acetate. The protein operates within amino-acid biosynthesis; L-cysteine biosynthesis; L-cysteine from L-serine: step 2/2. The polypeptide is Probable cysteine synthase (ytkP) (Bacillus subtilis (strain 168)).